Reading from the N-terminus, the 80-residue chain is uncharacterized protein (80 aa).

A signal peptide spans 1–15 (MVKLSFTLRFGDVWV).

This is an uncharacterized protein from Archaeoglobus fulgidus (strain ATCC 49558 / DSM 4304 / JCM 9628 / NBRC 100126 / VC-16).